The sequence spans 126 residues: Fluoride-specific ion channel FluC (126 aa).

The next 4 helical transmembrane spans lie at 4–24 (PLLSIALGSVLGAWLRWLLGL), 33–53 (IPLGTVTVNLAGGFIIGFAMA), 67–87 (FVITGFCGALTTFSTFSIEIV), and 97–117 (MAMLAISIHLIGSLIFTCLGL). Na(+) is bound by residues G74 and T77.

The protein belongs to the fluoride channel Fluc/FEX (TC 1.A.43) family.

The protein localises to the cell inner membrane. The enzyme catalyses fluoride(in) = fluoride(out). Na(+) is not transported, but it plays an essential structural role and its presence is essential for fluoride channel function. Fluoride-specific ion channel. Important for reducing fluoride concentration in the cell, thus reducing its toxicity. This chain is Fluoride-specific ion channel FluC, found in Acinetobacter baumannii (strain ACICU).